Consider the following 470-residue polypeptide: Cysteine--tRNA ligase (470 aa).

Residue C28 coordinates Zn(2+). The short motif at 30–40 (PTVYNYIHIGN) is the 'HIGH' region element. The Zn(2+) site is built by C212, H237, and E241. The 'KMSKS' region motif lies at 271–275 (KMSKS). K274 serves as a coordination point for ATP.

It belongs to the class-I aminoacyl-tRNA synthetase family. As to quaternary structure, monomer. Zn(2+) serves as cofactor.

Its subcellular location is the cytoplasm. It carries out the reaction tRNA(Cys) + L-cysteine + ATP = L-cysteinyl-tRNA(Cys) + AMP + diphosphate. The chain is Cysteine--tRNA ligase from Lactiplantibacillus plantarum (strain ATCC BAA-793 / NCIMB 8826 / WCFS1) (Lactobacillus plantarum).